The chain runs to 359 residues: Peptide chain release factor 1 (359 aa).

N5-methylglutamine is present on Gln-236.

The protein belongs to the prokaryotic/mitochondrial release factor family. In terms of processing, methylated by PrmC. Methylation increases the termination efficiency of RF1.

The protein localises to the cytoplasm. Peptide chain release factor 1 directs the termination of translation in response to the peptide chain termination codons UAG and UAA. This chain is Peptide chain release factor 1, found in Streptococcus pneumoniae serotype 4 (strain ATCC BAA-334 / TIGR4).